A 356-amino-acid polypeptide reads, in one-letter code: Zinc finger protein 830 (356 aa).

The stretch at 11–33 (AQEELRKLMKAKQRESSSKKRIE) forms a coiled coil. A C2H2-type zinc finger spans residues 47–69 (CVVCNSLIKSELLWPAHILGKQH). A disordered region spans residues 71 to 195 (EKVAELKGTK…PTSSADNLPA (125 aa)). The segment covering 80–90 (KATTSSPSNTI) has biased composition (polar residues). Basic and acidic residues-rich tracts occupy residues 99–118 (KGSE…EDHP) and 125–135 (LPEEFFEKEKT). Positions 150–165 (DYEDVDDDDAEEGEEY) are enriched in acidic residues. Positions 278 to 322 (AEEDEEGRLDRQIDEIDEQIQCYRRVEHLRDRKDTLQDAKMEVLK) form a coiled coil.

It is found in the nucleus. It localises to the chromosome. The protein resides in the nucleus speckle. May act as an important regulator of the cell cycle that participates in the maintenance of genome integrity. This chain is Zinc finger protein 830, found in Xenopus laevis (African clawed frog).